The chain runs to 122 residues: Glycine cleavage system H protein (122 aa).

The region spanning 19–101 (MVTVGVTHYA…ETEGWLWKMT (83 aa)) is the Lipoyl-binding domain. At K60 the chain carries N6-lipoyllysine.

This sequence belongs to the GcvH family. In terms of assembly, the glycine cleavage system is composed of four proteins: P, T, L and H. (R)-lipoate is required as a cofactor.

In terms of biological role, the glycine cleavage system catalyzes the degradation of glycine. The H protein shuttles the methylamine group of glycine from the P protein to the T protein. This Bartonella tribocorum (strain CIP 105476 / IBS 506) protein is Glycine cleavage system H protein.